The following is a 294-amino-acid chain: Shikimate dehydrogenase (NADP(+)) (294 aa).

Residues 14 to 16 and Thr61 each bind shikimate; that span reads SKS. Residue Lys65 is the Proton acceptor of the active site. Asp77 contributes to the NADP(+) binding site. Residues Asn86 and Asp102 each coordinate shikimate. Residues 140–144 and Leu235 each bind NADP(+); that span reads GSGGA. Tyr237 provides a ligand contact to shikimate. Gly259 is an NADP(+) binding site.

Belongs to the shikimate dehydrogenase family. In terms of assembly, homodimer.

The catalysed reaction is shikimate + NADP(+) = 3-dehydroshikimate + NADPH + H(+). Its pathway is metabolic intermediate biosynthesis; chorismate biosynthesis; chorismate from D-erythrose 4-phosphate and phosphoenolpyruvate: step 4/7. In terms of biological role, involved in the biosynthesis of the chorismate, which leads to the biosynthesis of aromatic amino acids. Catalyzes the reversible NADPH linked reduction of 3-dehydroshikimate (DHSA) to yield shikimate (SA). In Blochmanniella floridana, this protein is Shikimate dehydrogenase (NADP(+)).